The sequence spans 278 residues: Large ribosomal subunit protein uL2 (278 aa).

A disordered region spans residues 208–278 (AGRSRWMGKR…LIIRHRKGRK (71 aa)). Over residues 209-219 (GRSRWMGKRPQ) the composition is skewed to basic residues. Over residues 258-270 (KTRDSKKASEKLI) the composition is skewed to basic and acidic residues.

The protein belongs to the universal ribosomal protein uL2 family. As to quaternary structure, part of the 50S ribosomal subunit. Forms a bridge to the 30S subunit in the 70S ribosome.

In terms of biological role, one of the primary rRNA binding proteins. Required for association of the 30S and 50S subunits to form the 70S ribosome, for tRNA binding and peptide bond formation. It has been suggested to have peptidyltransferase activity; this is somewhat controversial. Makes several contacts with the 16S rRNA in the 70S ribosome. In Lactobacillus delbrueckii subsp. bulgaricus (strain ATCC 11842 / DSM 20081 / BCRC 10696 / JCM 1002 / NBRC 13953 / NCIMB 11778 / NCTC 12712 / WDCM 00102 / Lb 14), this protein is Large ribosomal subunit protein uL2.